A 217-amino-acid polypeptide reads, in one-letter code: MVASGRTASKGRGNGATPVRPTAGDATPVDSGQPSDTTYGGLEVSAERTRLRIPRDLSLEAWCRLGGRILAVCDSSVWWIGDWLVFGQNQYGDRYRRAMKETKLDYQTLRNYAWVARKFEPSRRRDSLTFQHHMEVAALSEAEQDHWLDFAVRLNWSRNELRKQIRASLSGEEDDLRCEVQLNLQLDELRLERWREAARGSNLTLTDWILSVVDGAV.

The disordered stretch occupies residues 1 to 41 (MVASGRTASKGRGNGATPVRPTAGDATPVDSGQPSDTTYGG).

Functionally, transcription regulator that specifically regulates expression of genes involved in the novobiocin biosynthesis pathway. Probably acts as a positive regulator of transcription. Does not bind DNA. This Streptomyces niveus (Streptomyces spheroides) protein is Transcriptional regulator NovE (novE).